The sequence spans 228 residues: Aspartyl protease inhibitor (228 aa).

The N-terminal stretch at 1–15 (MKLIELCVLCAIAFA) is a signal peptide. Residues 88–112 (KLKSRMSGKKEEKAAVTSTKDEDLP) show a composition bias toward basic and acidic residues. Positions 88 to 119 (KLKSRMSGKKEEKAAVTSTKDEDLPKPPQKPS) are disordered. Cysteine 134 and cysteine 224 are joined by a disulfide.

This sequence belongs to the protease inhibitor I33 family.

Its subcellular location is the secreted. Its function is as follows. Aspartyl protease inhibitor. This Trichostrongylus colubriformis (Black scour worm) protein is Aspartyl protease inhibitor.